Reading from the N-terminus, the 241-residue chain is Small ribosomal subunit protein uS2 (241 aa).

This sequence belongs to the universal ribosomal protein uS2 family.

The protein is Small ribosomal subunit protein uS2 of Escherichia coli O127:H6 (strain E2348/69 / EPEC).